The sequence spans 220 residues: MRDIIDGFLRFQRDAYPARSQLFKSLATRQAPKALFIACSDSRVVPELLTQREPGELFVIRNAGNIVPGYGPQPGGVSASVEYAVAVLGVGDIVVCGHSDCGAMGAIASCACLDQLPAVAGWLHHAEAARAMNSAHEHASEAARLDALVRHNVIAQLANLRTHPCVARALEQGRLNLHGWVYDIESGRIDALDGASRRFVSLAEHPEVRAVGGEPGQAVA.

Zn(2+) contacts are provided by Cys-39, Asp-41, His-98, and Cys-101.

Belongs to the beta-class carbonic anhydrase family. Zn(2+) serves as cofactor.

It carries out the reaction hydrogencarbonate + H(+) = CO2 + H2O. This is Carbonic anhydrase (cynT) from Pseudomonas aeruginosa (strain ATCC 15692 / DSM 22644 / CIP 104116 / JCM 14847 / LMG 12228 / 1C / PRS 101 / PAO1).